A 270-amino-acid chain; its full sequence is MDYYFTKGKPQLVNMKTPIYLVTQFQQLMDLMQNQYEVSCLELMQRSGKAACDFLVYRWPKVKKISIFCGRGDNGGQGYVLAQQAKKMGMVPTVWQVGHQMSMSKPPQMHKEVWYEMNSCHQQGIVLHTYSPDIDLGDPELIVDALFGVGLYGHVRPEIALLLQRLQQFTVPILAIEVPTGINASTGEIAGNALAATATITFLCMKLGLLINDGKIYSGEIAFDDLLAPEAIYQQVKGIEESSLLDSSTIFSKKIWYRNKTQKGWQLSIN.

The 210-residue stretch at 25–234 (FQQLMDLMQN…DLLAPEAIYQ (210 aa)) folds into the YjeF N-terminal domain. 73-77 (DNGGQ) contacts (6S)-NADPHX. Residues N74 and D144 each contribute to the K(+) site. (6S)-NADPHX contacts are provided by residues 148–154 (GVGLYGH) and E177. T180 provides a ligand contact to K(+).

This sequence belongs to the NnrE/AIBP family. Requires K(+) as cofactor.

The catalysed reaction is (6R)-NADHX = (6S)-NADHX. It catalyses the reaction (6R)-NADPHX = (6S)-NADPHX. In terms of biological role, catalyzes the epimerization of the S- and R-forms of NAD(P)HX, a damaged form of NAD(P)H that is a result of enzymatic or heat-dependent hydration. This is a prerequisite for the S-specific NAD(P)H-hydrate dehydratase to allow the repair of both epimers of NAD(P)HX. The chain is NAD(P)H-hydrate epimerase from Legionella pneumophila (strain Corby).